The primary structure comprises 264 residues: Thymidylate synthase (264 aa).

R21 lines the dUMP pocket. H51 is a (6R)-5,10-methylene-5,6,7,8-tetrahydrofolate binding site. Residue R126–R127 participates in dUMP binding. The active-site Nucleophile is C146. DUMP-binding positions include R166–D169, N177, and H207–Y209. D169 contributes to the (6R)-5,10-methylene-5,6,7,8-tetrahydrofolate binding site. A263 serves as a coordination point for (6R)-5,10-methylene-5,6,7,8-tetrahydrofolate.

The protein belongs to the thymidylate synthase family. Bacterial-type ThyA subfamily. In terms of assembly, homodimer.

It is found in the cytoplasm. The catalysed reaction is dUMP + (6R)-5,10-methylene-5,6,7,8-tetrahydrofolate = 7,8-dihydrofolate + dTMP. It participates in pyrimidine metabolism; dTTP biosynthesis. Catalyzes the reductive methylation of 2'-deoxyuridine-5'-monophosphate (dUMP) to 2'-deoxythymidine-5'-monophosphate (dTMP) while utilizing 5,10-methylenetetrahydrofolate (mTHF) as the methyl donor and reductant in the reaction, yielding dihydrofolate (DHF) as a by-product. This enzymatic reaction provides an intracellular de novo source of dTMP, an essential precursor for DNA biosynthesis. This Rhizobium etli (strain ATCC 51251 / DSM 11541 / JCM 21823 / NBRC 15573 / CFN 42) protein is Thymidylate synthase.